The primary structure comprises 200 residues: CASP-like protein 1D2 (200 aa).

The tract at residues 1–26 is disordered; that stretch reads MASTENPDPETGKSEPIPASATTPPP. Over 1–36 the chain is Cytoplasmic; sequence MASTENPDPETGKSEPIPASATTPPPSAASFLDCRK. Residues 37-57 traverse the membrane as a helical segment; the sequence is IDVIIRVLLFSATLTALIVMV. Over 58–85 the chain is Extracellular; sequence TSDQTEKTQLPGVSSPAPVSAEFNDSPA. A helical membrane pass occupies residues 86-106; the sequence is FIFFVVALVVTSFYALMSTLV. Over 107–129 the chain is Cytoplasmic; it reads SISLLLKPEFTARVSVYLASLDM. A helical membrane pass occupies residues 130 to 150; sequence VMLGILASATGTAGGVAYIAL. The Extracellular portion of the chain corresponds to 151 to 171; the sequence is KGNKEVGWNKICNVYDKFCRY. The helical transmembrane segment at 172–192 threads the bilayer; it reads IATSLALSLFATLLLLVLSIC. The Cytoplasmic segment spans residues 193–200; it reads SALSKRTP.

The protein belongs to the Casparian strip membrane proteins (CASP) family. In terms of assembly, homodimer and heterodimers.

It localises to the cell membrane. The protein is CASP-like protein 1D2 of Arabidopsis lyrata subsp. lyrata (Lyre-leaved rock-cress).